The chain runs to 717 residues: ATP-dependent zinc metalloprotease FtsH (717 aa).

Topologically, residues 1–7 are cytoplasmic; sequence MFKDKKM. The helical transmembrane segment at 8–28 threads the bilayer; that stretch reads LKYIVIYSIIAFGILLTFNMV. The Extracellular segment spans residues 29-109; it reads KDEMLYEKVD…VEFNVTKPEN (81 aa). The chain crosses the membrane as a helical span at residues 110 to 130; sequence YQLLGLLMSWVFPLILIFFVG. Over 131 to 717 the chain is Cytoplasmic; that stretch reads RMMFSKMNNK…SSTNNKVDGE (587 aa). 206 to 213 is a binding site for ATP; the sequence is GPPGTGKT. H427 contacts Zn(2+). E428 is a catalytic residue. Positions 431 and 504 each coordinate Zn(2+). A disordered region spans residues 670–717; sequence KLARANNEANNDALDSSKENEEVKSNVNDGATEEKKDDSSTNNKVDGE. Basic and acidic residues-rich tracts occupy residues 684-693 and 701-717; these read DSSKENEEVK and TEEK…VDGE.

This sequence in the central section; belongs to the AAA ATPase family. In the C-terminal section; belongs to the peptidase M41 family. Homohexamer. Zn(2+) is required as a cofactor.

The protein localises to the cell membrane. Functionally, acts as a processive, ATP-dependent zinc metallopeptidase for both cytoplasmic and membrane proteins. Plays a role in the quality control of integral membrane proteins. The polypeptide is ATP-dependent zinc metalloprotease FtsH (Clostridium perfringens (strain ATCC 13124 / DSM 756 / JCM 1290 / NCIMB 6125 / NCTC 8237 / Type A)).